The sequence spans 185 residues: PXMP2/4 family protein 4 (185 aa).

The next 3 helical transmembrane spans lie at 63–83 (MAVFGFAVTGPLFHYWFKYLD), 100–120 (IDQVVCSPVFNFLFFSGMGIL), and 141–161 (VSDCVVWPFINFVNFAYISSI).

It belongs to the peroxisomal membrane protein PXMP2/4 family.

Its subcellular location is the membrane. The polypeptide is PXMP2/4 family protein 4 (Dictyostelium discoideum (Social amoeba)).